We begin with the raw amino-acid sequence, 351 residues long: Photosystem II D2 protein 2 (351 aa).

A helical membrane pass occupies residues 39–59 (CAFLSIGGWFTGTTFVTSWYT). Histidine 116 provides a ligand contact to chlorophyll a. The chain crosses the membrane as a helical span at residues 123–139 (GFMLRQFEIARLVNVRP). The pheophytin a site is built by glutamine 128 and asparagine 141. The helical transmembrane segment at 151 to 164 (VFVSVFLMYPLGQS) threads the bilayer. Histidine 196 is a binding site for chlorophyll a. A helical transmembrane segment spans residues 206-226 (GALLCAIHGATVENTLFEDTK). 2 residues coordinate a plastoquinone: histidine 213 and phenylalanine 260. Histidine 213 contributes to the Fe cation binding site. Histidine 267 lines the Fe cation pocket. A helical transmembrane segment spans residues 277-293 (GLWASAIGLVGIALNMR).

The protein belongs to the reaction center PufL/M/PsbA/D family. PSII is composed of 1 copy each of membrane proteins PsbA, PsbB, PsbC, PsbD, PsbE, PsbF, PsbH, PsbI, PsbJ, PsbK, PsbL, PsbM, PsbT, PsbX, PsbY, PsbZ, Psb30/Ycf12, peripheral proteins PsbO, CyanoQ (PsbQ), PsbU, PsbV and a large number of cofactors. It forms dimeric complexes. It depends on The D1/D2 heterodimer binds P680, chlorophylls that are the primary electron donor of PSII, and subsequent electron acceptors. It shares a non-heme iron and each subunit binds pheophytin, quinone, additional chlorophylls, carotenoids and lipids. There is also a Cl(-1) ion associated with D1 and D2, which is required for oxygen evolution. The PSII complex binds additional chlorophylls, carotenoids and specific lipids. as a cofactor.

Its subcellular location is the cellular thylakoid membrane. It carries out the reaction 2 a plastoquinone + 4 hnu + 2 H2O = 2 a plastoquinol + O2. In terms of biological role, photosystem II (PSII) is a light-driven water:plastoquinone oxidoreductase that uses light energy to abstract electrons from H(2)O, generating O(2) and a proton gradient subsequently used for ATP formation. It consists of a core antenna complex that captures photons, and an electron transfer chain that converts photonic excitation into a charge separation. The D1/D2 (PsbA/PsbD) reaction center heterodimer binds P680, the primary electron donor of PSII as well as several subsequent electron acceptors. D2 is needed for assembly of a stable PSII complex. This chain is Photosystem II D2 protein 2, found in Acaryochloris marina (strain MBIC 11017).